The sequence spans 370 residues: DNA primase large subunit PriL (370 aa).

[4Fe-4S] cluster-binding residues include cysteine 230, cysteine 301, cysteine 310, and cysteine 317. The tract at residues 337–370 is disordered; the sequence is EGEEAQGKEQGKEKDDGKEKENGKESEVKKKKEK.

The protein belongs to the eukaryotic-type primase large subunit family. As to quaternary structure, heterodimer of a small subunit (PriS) and a large subunit (PriL). [4Fe-4S] cluster is required as a cofactor.

In terms of biological role, regulatory subunit of DNA primase, an RNA polymerase that catalyzes the synthesis of short RNA molecules used as primers for DNA polymerase during DNA replication. Stabilizes and modulates the activity of the small subunit, increasing the rate of DNA synthesis, and conferring RNA synthesis capability. The DNA polymerase activity may enable DNA primase to also catalyze primer extension after primer synthesis. May also play a role in DNA repair. This chain is DNA primase large subunit PriL, found in Methanosarcina mazei (strain ATCC BAA-159 / DSM 3647 / Goe1 / Go1 / JCM 11833 / OCM 88) (Methanosarcina frisia).